Consider the following 172-residue polypeptide: Protein YdeJ (172 aa).

It belongs to the CinA family.

In terms of biological role, does not have nicotinamide-nucleotide (NMN) amidohydrolase activity. The sequence is that of Protein YdeJ (ydeJ) from Escherichia coli (strain K12).